A 779-amino-acid chain; its full sequence is Pre-mRNA-splicing factor cef-1 (779 aa).

HTH myb-type domains are found at residues 1–56 (MPVV…DPSI) and 57–106 (KKIE…DEAE). 2 DNA-binding regions (H-T-H motif) span residues 29-52 (WARV…NEWL) and 80-102 (WRTI…QRLL). Disordered stretches follow at residues 113 to 192 (LGLT…ESRR), 246 to 284 (EYQR…PSVQ), 424 to 448 (TPLR…LRTP), and 497 to 525 (WELE…DRRE). Over residues 127–152 (SADDVRKLRPGEVDPDPETKPARPDT) the composition is skewed to basic and acidic residues. Residues 157-204 (EDEKEMLSEARARLANTQGKKAKRKARERQQEESRRLAALQKRRELKT) adopt a coiled-coil conformation. Basic and acidic residues-rich tracts occupy residues 246 to 256 (EYQRAHFDPKK) and 263 to 281 (RKGE…DKDP). A coiled-coil region spans residues 653–772 (DEEEEQISTM…EELDALTLNG (120 aa)).

This sequence belongs to the CEF1 family. Associated with the spliceosome.

It is found in the cytoplasm. Its subcellular location is the nucleus. Involved in pre-mRNA splicing and cell cycle control. The sequence is that of Pre-mRNA-splicing factor cef-1 (cef-1) from Neurospora crassa (strain ATCC 24698 / 74-OR23-1A / CBS 708.71 / DSM 1257 / FGSC 987).